The following is a 292-amino-acid chain: 5,10-methylenetetrahydrofolate reductase (292 aa).

Glutamate 26 serves as the catalytic Proton donor/acceptor. Position 57 (threonine 57) interacts with NADH. Residues tyrosine 58, alanine 60, histidine 86, arginine 116, glycine 117, aspartate 118, alanine 130, tyrosine 150, histidine 154, alanine 157, aspartate 163, asparagine 166, arginine 169, and lysine 170 each coordinate FAD. (6S)-5-methyl-5,6,7,8-tetrahydrofolate is bound at residue aspartate 118. Glutamine 181 is a binding site for NADH. (6S)-5-methyl-5,6,7,8-tetrahydrofolate is bound by residues glutamine 181, glutamine 217, and arginine 277.

The protein belongs to the methylenetetrahydrofolate reductase family. FAD is required as a cofactor.

The catalysed reaction is (6S)-5-methyl-5,6,7,8-tetrahydrofolate + NAD(+) = (6R)-5,10-methylene-5,6,7,8-tetrahydrofolate + NADH + H(+). Its pathway is one-carbon metabolism; tetrahydrofolate interconversion. It functions in the pathway amino-acid biosynthesis; L-methionine biosynthesis via de novo pathway. In terms of biological role, catalyzes the NADH-dependent reduction of 5,10-methylenetetrahydrofolate to 5-methyltetrahydrofolate. Is required to provide the methyl group necessary for methionine synthetase to convert homocysteine to methionine; the methyl group is given by 5-methyltetrahydrofolate. The polypeptide is 5,10-methylenetetrahydrofolate reductase (metF) (Haemophilus influenzae (strain ATCC 51907 / DSM 11121 / KW20 / Rd)).